Here is a 551-residue protein sequence, read N- to C-terminus: MGGEGDSSQPQSGEGEAVAVNIRCSNGTKFSVKTSLDSTVESFKELVAQSSDVPANQQRLIYKGRILKDDQTLLSYGLQADHTIHMVRGSAPSSAPPPAPAASQTTAPSVTRGVGSDNSSNLGGASPGESLFPGLGFNPLGGGNAMSGLFGAGLPDLVQTQQQLAQNPNMIRDMMNTPAIQNLMNNPEFMRSMIMNNPQMRELVDRNPELGHVLNDPSILRQTLEAARNPELMREMMRNTDRAMSNIESMPEGFNMLRRMYENVQEPLMNATTMSGNAGNNTGSNPFAALLGNQGVTTQGSDASNNSSTPNAGTGTIPNANPLPNPWGATGGQTTAPGRTNVGGDARSPGLGGLGGLGSLGGLGGLGMLGADSPLGATPDASQLSQLLQNPAISQMMQSVFSNPQYMNQLMSLNPQLRSMLDSNPQLREMMQNPDFLRQFSSPEMMQQMMTLQQSLSQNRNTASQDAGQTGAATGNNGGLDLLMNMFGSLGAGGLSGTNQSNVPPEERYATQLQQLQEMGFYDRAENIRALLATNGNVNAAVERLLGSIGQ.

Positions 18–93 (VAVNIRCSNG…IHMVRGSAPS (76 aa)) constitute a Ubiquitin-like domain. The tract at residues 88-127 (RGSAPSSAPPPAPAASQTTAPSVTRGVGSDNSSNLGGASP) is disordered. STI1 domains lie at 143 to 184 (GNAM…QNLM) and 197 to 236 (NPQM…MREM). Residues 294–319 (QGVTTQGSDASNNSSTPNAGTGTIPN) are compositionally biased toward polar residues. Residues 294–336 (QGVTTQGSDASNNSSTPNAGTGTIPNANPLPNPWGATGGQTTA) are disordered. STI1 domains follow at residues 373–410 (SPLG…MNQL) and 414–449 (NPQL…MQQM). Positions 455-475 (SLSQNRNTASQDAGQTGAATG) are disordered. Residues 465–475 (QDAGQTGAATG) show a composition bias toward low complexity. One can recognise a UBA domain in the interval 504–548 (PPEERYATQLQQLQEMGFYDRAENIRALLATNGNVNAAVERLLGS).

In terms of assembly, interacts with 'Lys-48'-linked polyubiquitin chains via its UBA domain. Interacts with RPN10 via its ubiquitin-like domain. Interacts with PEX2 and PEX12. Ubiquitous.

It localises to the nucleus. The protein resides in the cytoplasm. Its function is as follows. Binds and presumably selects ubiquitin-conjugates for destruction. Prefers multiubiquitin chains rather than single ubiquitins, with a binding affinity for 'Lys-48'-linked ubiquitin chains. Acts as a ubiquitin receptor that associates with the 26S proteasomal docking subunit RPN10 for the indirect recognition of ubiquitinated substrates of ubiquitin/26S proteasome-mediated proteolysis (UPP). This Arabidopsis thaliana (Mouse-ear cress) protein is Ubiquitin domain-containing protein DSK2b (DSK2B).